Reading from the N-terminus, the 621-residue chain is Chaperone protein HscA homolog (621 aa).

The protein belongs to the heat shock protein 70 family.

Its function is as follows. Chaperone involved in the maturation of iron-sulfur cluster-containing proteins. Has a low intrinsic ATPase activity which is markedly stimulated by HscB. This chain is Chaperone protein HscA homolog, found in Cupriavidus metallidurans (strain ATCC 43123 / DSM 2839 / NBRC 102507 / CH34) (Ralstonia metallidurans).